A 130-amino-acid chain; its full sequence is Small ribosomal subunit protein uS9 (130 aa).

It belongs to the universal ribosomal protein uS9 family.

The chain is Small ribosomal subunit protein uS9 from Colwellia psychrerythraea (strain 34H / ATCC BAA-681) (Vibrio psychroerythus).